Here is a 141-residue protein sequence, read N- to C-terminus: Large ribosomal subunit protein uL11 (141 aa).

It belongs to the universal ribosomal protein uL11 family. In terms of assembly, part of the ribosomal stalk of the 50S ribosomal subunit. Interacts with L10 and the large rRNA to form the base of the stalk. L10 forms an elongated spine to which L12 dimers bind in a sequential fashion forming a multimeric L10(L12)X complex. In terms of processing, one or more lysine residues are methylated.

Its function is as follows. Forms part of the ribosomal stalk which helps the ribosome interact with GTP-bound translation factors. This chain is Large ribosomal subunit protein uL11, found in Clostridium botulinum (strain Alaska E43 / Type E3).